We begin with the raw amino-acid sequence, 477 residues long: Bifunctional protein HldE (477 aa).

The segment at 1 to 318 is ribokinase; sequence MKVTLPDFRR…ENAIRGRADT (318 aa). An ATP-binding site is contributed by 195 to 198; the sequence is NLSE. Asp-264 is an active-site residue. The cytidylyltransferase stretch occupies residues 344 to 477; that stretch reads MTNGVFDILH…INIIRQGQND (134 aa).

The protein in the N-terminal section; belongs to the carbohydrate kinase PfkB family. It in the C-terminal section; belongs to the cytidylyltransferase family. As to quaternary structure, homodimer.

It carries out the reaction D-glycero-beta-D-manno-heptose 7-phosphate + ATP = D-glycero-beta-D-manno-heptose 1,7-bisphosphate + ADP + H(+). It catalyses the reaction D-glycero-beta-D-manno-heptose 1-phosphate + ATP + H(+) = ADP-D-glycero-beta-D-manno-heptose + diphosphate. The protein operates within nucleotide-sugar biosynthesis; ADP-L-glycero-beta-D-manno-heptose biosynthesis; ADP-L-glycero-beta-D-manno-heptose from D-glycero-beta-D-manno-heptose 7-phosphate: step 1/4. It participates in nucleotide-sugar biosynthesis; ADP-L-glycero-beta-D-manno-heptose biosynthesis; ADP-L-glycero-beta-D-manno-heptose from D-glycero-beta-D-manno-heptose 7-phosphate: step 3/4. Catalyzes the phosphorylation of D-glycero-D-manno-heptose 7-phosphate at the C-1 position to selectively form D-glycero-beta-D-manno-heptose-1,7-bisphosphate. Its function is as follows. Catalyzes the ADP transfer from ATP to D-glycero-beta-D-manno-heptose 1-phosphate, yielding ADP-D-glycero-beta-D-manno-heptose. The protein is Bifunctional protein HldE of Edwardsiella ictaluri (strain 93-146).